Consider the following 321-residue polypeptide: Lipoyl synthase (321 aa).

[4Fe-4S] cluster is bound by residues cysteine 68, cysteine 73, cysteine 79, cysteine 94, cysteine 98, cysteine 101, and serine 308. The Radical SAM core domain occupies 80-297; sequence FNHGTATFMI…KALADELGFT (218 aa).

The protein belongs to the radical SAM superfamily. Lipoyl synthase family. It depends on [4Fe-4S] cluster as a cofactor.

The protein localises to the cytoplasm. The enzyme catalyses [[Fe-S] cluster scaffold protein carrying a second [4Fe-4S](2+) cluster] + N(6)-octanoyl-L-lysyl-[protein] + 2 oxidized [2Fe-2S]-[ferredoxin] + 2 S-adenosyl-L-methionine + 4 H(+) = [[Fe-S] cluster scaffold protein] + N(6)-[(R)-dihydrolipoyl]-L-lysyl-[protein] + 4 Fe(3+) + 2 hydrogen sulfide + 2 5'-deoxyadenosine + 2 L-methionine + 2 reduced [2Fe-2S]-[ferredoxin]. It functions in the pathway protein modification; protein lipoylation via endogenous pathway; protein N(6)-(lipoyl)lysine from octanoyl-[acyl-carrier-protein]: step 2/2. Its function is as follows. Catalyzes the radical-mediated insertion of two sulfur atoms into the C-6 and C-8 positions of the octanoyl moiety bound to the lipoyl domains of lipoate-dependent enzymes, thereby converting the octanoylated domains into lipoylated derivatives. This is Lipoyl synthase from Shewanella baltica (strain OS223).